Reading from the N-terminus, the 312-residue chain is DNA-directed RNA polymerase subunit alpha (312 aa).

Positions 1-226 are alpha N-terminal domain (alpha-NTD); it reads MIEFEKPNIT…EHLDIFVNLT (226 aa). Residues 243 to 312 form an alpha C-terminal domain (alpha-CTD) region; sequence KEKMLEMTIE…DLGLGLRKED (70 aa).

Belongs to the RNA polymerase alpha chain family. Homodimer. The RNAP catalytic core consists of 2 alpha, 1 beta, 1 beta' and 1 omega subunit. When a sigma factor is associated with the core the holoenzyme is formed, which can initiate transcription.

It catalyses the reaction RNA(n) + a ribonucleoside 5'-triphosphate = RNA(n+1) + diphosphate. Its function is as follows. DNA-dependent RNA polymerase catalyzes the transcription of DNA into RNA using the four ribonucleoside triphosphates as substrates. The chain is DNA-directed RNA polymerase subunit alpha from Lacticaseibacillus casei (strain BL23) (Lactobacillus casei).